The chain runs to 1170 residues: Thrombospondin-2 (1170 aa).

Residues 1–18 form the signal peptide; the sequence is MLWPLLLLALWAWPSAQA. The Laminin G-like domain maps to 19 to 215; that stretch reads GDQDEDTAFD…LQNVYLVFEN (197 aa). The heparin-binding stretch occupies residues 19-232; the sequence is GDQDEDTAFD…KKGCQQSQGA (214 aa). Residues Asn-151, Asn-316, and Asn-330 are each glycosylated (N-linked (GlcNAc...) asparagine). The 58-residue stretch at 318-375 folds into the VWFC domain; the sequence is SACWQDGRFFAENETWVVDSCTKCTCKKFKTVCHQISCPPATCADPWFVEGECCPSCV. TSP type-1 domains lie at 379 to 429, 435 to 490, and 492 to 547; these read EEGW…GRCD, DGGW…PPCP, and DGRW…KSCP. Intrachain disulfides connect Cys-391–Cys-423, Cys-395–Cys-428, Cys-406–Cys-413, Cys-447–Cys-484, Cys-451–Cys-489, Cys-462–Cys-474, Cys-504–Cys-541, Cys-508–Cys-546, Cys-519–Cys-531, Cys-551–Cys-562, Cys-556–Cys-572, Cys-575–Cys-586, Cys-592–Cys-608, Cys-599–Cys-617, Cys-620–Cys-644, Cys-650–Cys-663, Cys-657–Cys-676, Cys-678–Cys-689, Cys-705–Cys-713, Cys-718–Cys-738, Cys-754–Cys-774, Cys-777–Cys-797, Cys-813–Cys-833, Cys-836–Cys-856, Cys-874–Cys-894, and Cys-910–Cys-930. Residue Asn-455 is glycosylated (N-linked (GlcNAc...) asparagine). Residues 547–587 enclose the EGF-like 1 domain; the sequence is PIDGCLSNPCFPGAECSSFPDGSWSCGSCPGGFLGNGTHCE. N-linked (GlcNAc...) asparagine glycosylation occurs at Asn-582. Positions 646–690 constitute an EGF-like 2 domain; that stretch reads PENPCKDKTHSCHRHAECIYLGHFSDPMYKCECQTGYAGDGLICG. TSP type-3 repeat units lie at residues 691 to 726, 727 to 762, 763 to 785, 786 to 821, 822 to 844, 845 to 882, 883 to 918, and 919 to 954; these read EDSD…NSGQ, EDFD…NPRQ, FDYD…NPAQ, IDTD…NTDQ, RDTD…NPDQ, TDVD…NANQ, ADHD…NPDQ, and EDSD…AISE. N-linked (GlcNAc...) asparagine glycosylation occurs at Asn-708. The tract at residues 731-750 is disordered; it reads KDGIGDACDDDDDNDGVSDE. Positions 737–747 are enriched in acidic residues; that stretch reads ACDDDDDNDGV. Residues 841-944 are disordered; sequence NPDQTDVDND…DNDSIPDIDD (104 aa). 2 stretches are compositionally biased toward acidic residues: residues 845 to 864 and 894 to 903; these read TDVD…DIDE and CDSDDDNDGI. Over residues 923 to 933 the composition is skewed to basic and acidic residues; the sequence is GDRRGDACKDD. The short motif at 926 to 928 is the Cell attachment site element; it reads RGD. Acidic residues predominate over residues 934 to 944; that stretch reads FDNDSIPDIDD. Residues Asn-936 and Asn-1067 are each glycosylated (N-linked (GlcNAc...) asparagine). Cys-946 and Cys-1167 are disulfide-bonded. One can recognise a TSP C-terminal domain in the interval 958–1170; sequence RNFQMVHLDP…SDLKYECRDV (213 aa).

The protein belongs to the thrombospondin family. As to quaternary structure, homotrimer; disulfide-linked. Can bind to fibrinogen, fibronectin, laminin and type V collagen. Interacts (via the TSP type I repeats) with CD36; the interaction conveys an antiangiogenic effect. Interacts (via the TSP type I repeats) with HRG; the interaction blocks the antiangiogenic effect of THBS2 with CD36.

Its function is as follows. Adhesive glycoprotein that mediates cell-to-cell and cell-to-matrix interactions. Ligand for CD36 mediating antiangiogenic properties. The sequence is that of Thrombospondin-2 (THBS2) from Bos taurus (Bovine).